Here is a 335-residue protein sequence, read N- to C-terminus: GTPase Obg (335 aa).

The region spanning 1–158 (MFVDQITLEL…RLVELELKLI (158 aa)) is the Obg domain. In terms of domain architecture, OBG-type G spans 159–334 (ADIGLVGFPN…LYDLFKSKLS (176 aa)). GTP contacts are provided by residues 165 to 172 (GFPNAGKS), 190 to 194 (FTTLH), 215 to 218 (DIPG), 285 to 288 (NKID), and 315 to 317 (SGL). Residues S172 and T192 each contribute to the Mg(2+) site.

The protein belongs to the TRAFAC class OBG-HflX-like GTPase superfamily. OBG GTPase family. As to quaternary structure, monomer. Mg(2+) serves as cofactor.

The protein localises to the cytoplasm. In terms of biological role, an essential GTPase which binds GTP, GDP and possibly (p)ppGpp with moderate affinity, with high nucleotide exchange rates and a fairly low GTP hydrolysis rate. Plays a role in control of the cell cycle, stress response, ribosome biogenesis and in those bacteria that undergo differentiation, in morphogenesis control. The chain is GTPase Obg from Chlamydia trachomatis serovar L2 (strain ATCC VR-902B / DSM 19102 / 434/Bu).